The primary structure comprises 122 residues: Large ribosomal subunit protein uL14 (122 aa).

It belongs to the universal ribosomal protein uL14 family. Part of the 50S ribosomal subunit. Forms a cluster with proteins L3 and L19. In the 70S ribosome, L14 and L19 interact and together make contacts with the 16S rRNA in bridges B5 and B8.

Its function is as follows. Binds to 23S rRNA. Forms part of two intersubunit bridges in the 70S ribosome. The protein is Large ribosomal subunit protein uL14 of Bacillus velezensis (strain DSM 23117 / BGSC 10A6 / LMG 26770 / FZB42) (Bacillus amyloliquefaciens subsp. plantarum).